Here is a 156-residue protein sequence, read N- to C-terminus: 6,7-dimethyl-8-ribityllumazine synthase (156 aa).

5-amino-6-(D-ribitylamino)uracil is bound by residues F24, 58 to 60 (AFE), and 82 to 84 (VII). 87 to 88 (ST) contacts (2S)-2-hydroxy-3-oxobutyl phosphate. Residue H90 is the Proton donor of the active site. Residue F115 participates in 5-amino-6-(D-ribitylamino)uracil binding. Residue R129 participates in (2S)-2-hydroxy-3-oxobutyl phosphate binding.

Belongs to the DMRL synthase family.

It catalyses the reaction (2S)-2-hydroxy-3-oxobutyl phosphate + 5-amino-6-(D-ribitylamino)uracil = 6,7-dimethyl-8-(1-D-ribityl)lumazine + phosphate + 2 H2O + H(+). The protein operates within cofactor biosynthesis; riboflavin biosynthesis; riboflavin from 2-hydroxy-3-oxobutyl phosphate and 5-amino-6-(D-ribitylamino)uracil: step 1/2. Functionally, catalyzes the formation of 6,7-dimethyl-8-ribityllumazine by condensation of 5-amino-6-(D-ribitylamino)uracil with 3,4-dihydroxy-2-butanone 4-phosphate. This is the penultimate step in the biosynthesis of riboflavin. The protein is 6,7-dimethyl-8-ribityllumazine synthase of Chlorobaculum parvum (strain DSM 263 / NCIMB 8327) (Chlorobium vibrioforme subsp. thiosulfatophilum).